We begin with the raw amino-acid sequence, 119 residues long: Urease subunit beta (119 aa).

Belongs to the urease beta subunit family. In terms of assembly, heterotrimer of UreA (gamma), UreB (beta) and UreC (alpha) subunits. Three heterotrimers associate to form the active enzyme.

The protein resides in the cytoplasm. It catalyses the reaction urea + 2 H2O + H(+) = hydrogencarbonate + 2 NH4(+). It functions in the pathway nitrogen metabolism; urea degradation; CO(2) and NH(3) from urea (urease route): step 1/1. This is Urease subunit beta from Tolumonas auensis (strain DSM 9187 / NBRC 110442 / TA 4).